A 291-amino-acid polypeptide reads, in one-letter code: Putative GATA transcription factor 13 (291 aa).

A GATA-type zinc finger spans residues 187–241 (KSRRLKCTHCETTTTPQWREGPNGRKTLCNACGIRFRSGRLVLEYRPAASPTFIP). Positions 271–291 (TSGPETRSRLRNFGRPMSYGQ) are disordered.

The protein belongs to the type IV zinc-finger family. Class A subfamily.

Its subcellular location is the nucleus. Its function is as follows. Transcriptional activator that specifically binds 5'-GATA-3' or 5'-GAT-3' motifs within gene promoters. May be involved in the regulation of some light-responsive genes. This chain is Putative GATA transcription factor 13 (GATA13), found in Arabidopsis thaliana (Mouse-ear cress).